Here is a 108-residue protein sequence, read N- to C-terminus: Peptidyl-prolyl cis-trans isomerase FKBP1A (108 aa).

A PPIase FKBP-type domain is found at Gly20 to Glu108. N6-acetyllysine; alternate is present on Lys53. Position 53 is an N6-succinyllysine; alternate (Lys53).

Belongs to the FKBP-type PPIase family. FKBP1 subfamily. As to quaternary structure, interacts with TGFBR1; prevents TGFBR1 phosphorylation by TGFBR2 and stabilizes it in the inactive conformation. Interacts with ACVR1B and SMAD7. Identified in a complex composed of RYR1, PDE4D, PKA, FKBP1A and protein phosphatase 1 (PP1). Interacts directly with RYR2 and RYR3. Interacts with GLMN; rapamycin and FK506 abolish the interaction with GLMN in a dose dependent manner. Interacts directly with RYR1.

The protein localises to the cytoplasm. Its subcellular location is the cytosol. It is found in the sarcoplasmic reticulum membrane. It carries out the reaction [protein]-peptidylproline (omega=180) = [protein]-peptidylproline (omega=0). With respect to regulation, inhibited by both FK506 and rapamycin. Keeps in an inactive conformation TGFBR1, the TGF-beta type I serine/threonine kinase receptor, preventing TGF-beta receptor activation in absence of ligand. Recruits SMAD7 to ACVR1B which prevents the association of SMAD2 and SMAD3 with the activin receptor complex, thereby blocking the activin signal. May modulate the RYR1 calcium channel activity. PPIases accelerate the folding of proteins. It catalyzes the cis-trans isomerization of proline imidic peptide bonds in oligopeptides. The protein is Peptidyl-prolyl cis-trans isomerase FKBP1A (FKBP1A) of Homo sapiens (Human).